A 297-amino-acid polypeptide reads, in one-letter code: 4-hydroxy-tetrahydrodipicolinate synthase (297 aa).

Threonine 50 is a binding site for pyruvate. The Proton donor/acceptor role is filled by tyrosine 139. Lysine 167 (schiff-base intermediate with substrate) is an active-site residue. Position 209 (valine 209) interacts with pyruvate.

Belongs to the DapA family. Homotetramer; dimer of dimers.

It localises to the cytoplasm. The enzyme catalyses L-aspartate 4-semialdehyde + pyruvate = (2S,4S)-4-hydroxy-2,3,4,5-tetrahydrodipicolinate + H2O + H(+). It functions in the pathway amino-acid biosynthesis; L-lysine biosynthesis via DAP pathway; (S)-tetrahydrodipicolinate from L-aspartate: step 3/4. In terms of biological role, catalyzes the condensation of (S)-aspartate-beta-semialdehyde [(S)-ASA] and pyruvate to 4-hydroxy-tetrahydrodipicolinate (HTPA). The polypeptide is 4-hydroxy-tetrahydrodipicolinate synthase (Microcystis aeruginosa (strain NIES-843 / IAM M-2473)).